Consider the following 630-residue polypeptide: 1-deoxy-D-xylulose-5-phosphate synthase (630 aa).

Thiamine diphosphate is bound by residues His-72 and 113–115; that span reads GHS. Asp-144 lines the Mg(2+) pocket. Thiamine diphosphate contacts are provided by residues 145–146, Asn-173, Tyr-284, and Glu-367; that span reads GA. A Mg(2+)-binding site is contributed by Asn-173.

This sequence belongs to the transketolase family. DXPS subfamily. As to quaternary structure, homodimer. Mg(2+) is required as a cofactor. It depends on thiamine diphosphate as a cofactor.

The enzyme catalyses D-glyceraldehyde 3-phosphate + pyruvate + H(+) = 1-deoxy-D-xylulose 5-phosphate + CO2. It participates in metabolic intermediate biosynthesis; 1-deoxy-D-xylulose 5-phosphate biosynthesis; 1-deoxy-D-xylulose 5-phosphate from D-glyceraldehyde 3-phosphate and pyruvate: step 1/1. Catalyzes the acyloin condensation reaction between C atoms 2 and 3 of pyruvate and glyceraldehyde 3-phosphate to yield 1-deoxy-D-xylulose-5-phosphate (DXP). The protein is 1-deoxy-D-xylulose-5-phosphate synthase of Bacillus cytotoxicus (strain DSM 22905 / CIP 110041 / 391-98 / NVH 391-98).